A 398-amino-acid chain; its full sequence is S-adenosylmethionine synthase (398 aa).

H16 contributes to the ATP binding site. D18 serves as a coordination point for Mg(2+). Residue E51 coordinates K(+). L-methionine is bound by residues E64 and Q108. Residues 108 to 118 (QSADIAQGVDA) are flexible loop. Residues 176–178 (DSK), 242–243 (KF), D251, 257–258 (RK), A274, and K278 contribute to the ATP site. Residue D251 participates in L-methionine binding. K282 provides a ligand contact to L-methionine.

Belongs to the AdoMet synthase family. Homotetramer; dimer of dimers. Mg(2+) is required as a cofactor. It depends on K(+) as a cofactor.

Its subcellular location is the cytoplasm. The catalysed reaction is L-methionine + ATP + H2O = S-adenosyl-L-methionine + phosphate + diphosphate. It functions in the pathway amino-acid biosynthesis; S-adenosyl-L-methionine biosynthesis; S-adenosyl-L-methionine from L-methionine: step 1/1. In terms of biological role, catalyzes the formation of S-adenosylmethionine (AdoMet) from methionine and ATP. The overall synthetic reaction is composed of two sequential steps, AdoMet formation and the subsequent tripolyphosphate hydrolysis which occurs prior to release of AdoMet from the enzyme. This is S-adenosylmethionine synthase from Nitrobacter hamburgensis (strain DSM 10229 / NCIMB 13809 / X14).